Reading from the N-terminus, the 708-residue chain is Nicastrin (708 aa).

Residues 1 to 27 form the signal peptide; the sequence is MATTRGGSGPDPGSRGLLLLSFSVVLA. At 28 to 668 the chain is on the lumenal side; sequence GLCGGNSVER…IFLIASKELE (641 aa). N-linked (GlcNAc...) asparagine glycans are attached at residues Asn-44, Asn-54, and Asn-128. Cys-49 and Cys-61 are joined by a disulfide. An intrachain disulfide couples Cys-139 to Cys-158. Residues Asn-186 and Asn-203 are each glycosylated (N-linked (GlcNAc...) asparagine). Disulfide bonds link Cys-194–Cys-212 and Cys-229–Cys-247. 11 N-linked (GlcNAc...) asparagine glycosylation sites follow: Asn-263, Asn-386, Asn-434, Asn-463, Asn-505, Asn-529, Asn-561, Asn-572, Asn-579, Asn-593, and Asn-611. Cysteines 585 and 619 form a disulfide. A helical membrane pass occupies residues 669 to 689; the sequence is FITLIVGFSTLVFSLIVTYCI. Residues 690–708 are Cytoplasmic-facing; the sequence is NAKADVLFVAPREPGAVSY.

Belongs to the nicastrin family. As to quaternary structure, component of the gamma-secretase complex. The functional gamma-secretase complex is composed of at least four polypeptides: a presenilin homodimer (PSEN1 or PSEN2), nicastrin (NCSTN), APH1 (APH1A or APH1B) and PEN2. Binds to proteolytic processed C-terminal fragments C83 and C99 of the amyloid precursor protein (APP). Interacts with PSEN1 and PSEN2. Post-translationally, N-glycosylated.

Its subcellular location is the membrane. The protein localises to the cytoplasmic vesicle membrane. It is found in the melanosome. Its function is as follows. Essential subunit of the gamma-secretase complex, an endoprotease complex that catalyzes the intramembrane cleavage of integral membrane proteins such as Notch receptors and APP (amyloid-beta precursor protein). The gamma-secretase complex plays a role in Notch and Wnt signaling cascades and regulation of downstream processes via its role in processing key regulatory proteins, and by regulating cytosolic CTNNB1 levels. The polypeptide is Nicastrin (Ncstn) (Mus musculus (Mouse)).